Consider the following 99-residue polypeptide: RNA-binding protein Hfq (99 aa).

The Sm domain occupies 10 to 71; that stretch reads DLFLNQLRKE…ISSILPSKPI (62 aa). A disordered region spans residues 77 to 99; that stretch reads VQNSQVQNTASQQSNNNQNQESK.

Belongs to the Hfq family. In terms of assembly, homohexamer.

Functionally, RNA chaperone that binds small regulatory RNA (sRNAs) and mRNAs to facilitate mRNA translational regulation in response to envelope stress, environmental stress and changes in metabolite concentrations. Also binds with high specificity to tRNAs. The protein is RNA-binding protein Hfq of Caldicellulosiruptor saccharolyticus (strain ATCC 43494 / DSM 8903 / Tp8T 6331).